Here is an 89-residue protein sequence, read N- to C-terminus: Submaxillary mucin (89 aa).

Residues 1–89 (AGSVGRTAGG…VGGSPVATTL (89 aa)) form a disordered region. A glycan (O-linked (GalNAc...) serine; partial) is linked at serine 3. 2 O-linked (GalNAc...) threonine; partial glycosylation sites follow: threonine 7 and threonine 14. O-linked (GalNAc...) serine; partial glycosylation is present at serine 15. Residue threonine 23 is glycosylated (O-linked (GalNAc...) threonine; partial). A glycan (O-linked (GalNAc...) serine; partial) is linked at serine 25. O-linked (GalNAc...) threonine; partial glycosylation is present at threonine 27. O-linked (GalNAc...) serine; partial glycosylation occurs at serine 29. Threonine 34 carries O-linked (GalNAc...) threonine; partial glycosylation. Serine 38 is a glycosylation site (O-linked (GalNAc...) serine; partial). A glycan (O-linked (GalNAc...) threonine; partial) is linked at threonine 42. Residues serine 47 and serine 49 are each glycosylated (O-linked (GalNAc...) serine; partial). O-linked (GalNAc...) threonine; partial glycosylation is present at threonine 50. Serine 54 is a glycosylation site (O-linked (GalNAc...) serine; partial). The segment covering 56 to 71 (APGTTLAGRAGTTLGP) has biased composition (low complexity). 4 O-linked (GalNAc...) threonine; partial glycosylation sites follow: threonine 59, threonine 60, threonine 67, and threonine 68. O-linked (GalNAc...) serine; partial glycosylation is found at serine 73 and serine 76. An O-linked (GalNAc...) threonine; partial glycan is attached at threonine 78. O-linked (GalNAc...) serine; partial glycosylation is present at serine 83.

Post-translationally, heavily O-glycosylated at most but not all Ser and Thr residues. Expressed in the submaxillary salivary gland.

It is found in the secreted. This Canis lupus familiaris (Dog) protein is Submaxillary mucin.